The primary structure comprises 346 residues: Enoyl-[acyl-carrier-protein] reductase, mitochondrial (346 aa).

The N-terminal 22 residues, 1-22, are a transit peptide targeting the mitochondrion; that stretch reads MQKTIRSQALIYRKFGDPLKVL. Tyr-59 serves as the catalytic Proton donor. NADP(+)-binding positions include Asn-131, 157-160, 180-182, 249-252, 274-276, and Lys-332; these read NSGV, RNR, YGGM, and VAV.

Belongs to the zinc-containing alcohol dehydrogenase family. Quinone oxidoreductase subfamily. Homodimer.

It is found in the mitochondrion. The catalysed reaction is a 2,3-saturated acyl-[ACP] + NADP(+) = a (2E)-enoyl-[ACP] + NADPH + H(+). Functionally, catalyzes the NADPH-dependent reduction of trans-2-enoyl thioesters in mitochondrial fatty acid synthesis (fatty acid synthesis type II). Fatty acid chain elongation in mitochondria uses acyl carrier protein (ACP) as an acyl group carrier, but the enzyme accepts both ACP and CoA thioesters as substrates in vitro. May provide the octanoyl chain used for lipoic acid biosynthesis, regulating protein lipoylation and mitochondrial respiratory activity. Involved in iron homeostasis; affecting Fe-S cluster assembly and ceramide metabolism. Required for proper morphology and bioenergetic functions of mitochondria. Required for maintenance of neurons. The sequence is that of Enoyl-[acyl-carrier-protein] reductase, mitochondrial from Caenorhabditis elegans.